A 437-amino-acid polypeptide reads, in one-letter code: Adenosylhomocysteinase (437 aa).

The substrate site is built by T54, D130, and E155. 156 to 158 provides a ligand contact to NAD(+); sequence TTT. Residues K185 and D189 each coordinate substrate. Residues N190, 219–224, E242, N277, 298–300, and N345 contribute to the NAD(+) site; these read GYGDVG and IGH.

It belongs to the adenosylhomocysteinase family. As to quaternary structure, homotetramer. The cofactor is NAD(+).

The protein resides in the cytoplasm. The catalysed reaction is S-adenosyl-L-homocysteine + H2O = L-homocysteine + adenosine. Its pathway is amino-acid biosynthesis; L-homocysteine biosynthesis; L-homocysteine from S-adenosyl-L-homocysteine: step 1/1. Functionally, adenosylhomocysteine is a competitive inhibitor of S-adenosyl-L-methionine-dependent methyl transferase reactions; therefore adenosylhomocysteinase may play a key role in the control of methylations via regulation of the intracellular concentration of adenosylhomocysteine. The polypeptide is Adenosylhomocysteinase (Leishmania donovani).